A 928-amino-acid polypeptide reads, in one-letter code: Probable outer membrane protein pmp11 (928 aa).

An N-terminal signal peptide occupies residues 1 to 24 (MKTSIPWVLVSSVLAFSCHLQSLA). Positions 627–928 (GMEHKQGFWV…NVDVGTKLRF (302 aa)) constitute an Autotransporter domain.

This sequence belongs to the PMP outer membrane protein family.

It localises to the secreted. Its subcellular location is the cell wall. The protein resides in the cell outer membrane. In Chlamydia pneumoniae (Chlamydophila pneumoniae), this protein is Probable outer membrane protein pmp11 (pmp11).